The sequence spans 589 residues: Serine/threonine-protein kinase STE7 homolog (589 aa).

Positions 1–18 are enriched in basic and acidic residues; it reads MTRTTRIDTQEATKHKDL. Disordered regions lie at residues 1-162 and 185-232; these read MTRT…DPDN and RQHY…PASS. Residues 24 to 33 show a composition bias toward low complexity; sequence PLSLSSNPNP. Residues 57–69 show a composition bias toward polar residues; sequence VKSTSGSLRSSDM. Positions 92 to 121 are enriched in low complexity; that stretch reads PTASSSATSTPTSNITGSSSASSIQFAQKS. 2 stretches are compositionally biased toward polar residues: residues 127–136 and 144–162; these read IVSQTLSRPS and SGYS…DPDN. Residues 185–203 are compositionally biased toward basic residues; that stretch reads RQHYQNSHHHLPTTNRKRQ. The span at 206-220 shows a compositional bias: low complexity; sequence ISSISPTKSSAASSP. One can recognise a Protein kinase domain in the interval 249-565; it reads LLTLKQLGSG…QLLEDKEHFF (317 aa). ATP contacts are provided by residues 255-263 and Lys278; that span reads LGSGNSGSV. The Proton acceptor role is filled by Asp374. Ser402 carries the post-translational modification Phosphoserine. Thr408 carries the phosphothreonine modification. Positions 473 to 499 are disordered; it reads IAAERNGQNSPSRSRKNKQKGNGYNSY.

The protein belongs to the protein kinase superfamily. STE Ser/Thr protein kinase family. MAP kinase kinase subfamily.

The enzyme catalyses L-seryl-[protein] + ATP = O-phospho-L-seryl-[protein] + ADP + H(+). It carries out the reaction L-threonyl-[protein] + ATP = O-phospho-L-threonyl-[protein] + ADP + H(+). The catalysed reaction is L-tyrosyl-[protein] + ATP = O-phospho-L-tyrosyl-[protein] + ADP + H(+). This Candida albicans (strain WO-1) (Yeast) protein is Serine/threonine-protein kinase STE7 homolog (HST7).